Reading from the N-terminus, the 545-residue chain is Metal transporter NRAT1 (545 aa).

Transmembrane regions (helical) follow at residues 51–71 (FLAH…PSNL), 84–104 (ELLW…TLAA), 128–148 (IFLW…EVLG), 155–175 (ILLK…TLLL), 188–208 (FIIA…LSYL), 234–254 (IALF…ALVL), 278–298 (LAFI…GSIC), 333–353 (VVYA…CTFA), 373–395 (LITR…PSGA), 398–418 (LIIL…IPLL), 437–457 (VVIA…FLVW), and 474–494 (GLIS…VVYL). The disordered stretch occupies residues 516–545 (EAGGTPVVDASAADEDQPAPYRKDLADASM). Positions 536–545 (YRKDLADASM) are enriched in basic and acidic residues.

It belongs to the NRAMP (TC 2.A.55) family. Expressed at low levels in roots.

It is found in the cell membrane. Its function is as follows. Metal transporter that transports the trivalent cation aluminum (Al(3+)), but does not seem to transport divalent cations such as iron (Fe(2+)), manganese (Mg(2+)) or Cadmium (Cd(2+)). Involved in Al tolerance by taking up Al in root cells, where it is detoxified by chelation with organic acid anions and sequestration into the vacuoles. The chain is Metal transporter NRAT1 (NRAT1) from Oryza sativa subsp. japonica (Rice).